The following is a 329-amino-acid chain: RING finger protein 225 (329 aa).

Residues 1 to 55 (MPCPRPFWLRHSRAPQGSGPSSPGSLSAPRSPSRGEDQEEEEEEEGDGSPGSGPI) form a disordered region. Residues 14–32 (APQGSGPSSPGSLSAPRSP) are compositionally biased toward low complexity. Residues 37–47 (DQEEEEEEEGD) are compositionally biased toward acidic residues. The RING-type zinc finger occupies 64-112 (CLICVSSFDGVFKLPKRLDCGHVFCLECLARLSLATAGGGNAVACPVCR). The tract at residues 122–181 (GLPALPTQSGLLPRDARAPPSRQGSVRFDRRRGLLYLRPPPPPPGPRKARAPPPPPPLRL) is disordered. A compositionally biased stretch (pro residues) spans 159-179 (RPPPPPPGPRKARAPPPPPPL). The helical transmembrane segment at 203–223 (ALAVLVAAGLVVSGVYIFFLI) threads the bilayer. The segment at 248–329 (FPPRPPPGSP…RGARRLWGSQ (82 aa)) is disordered. Over residues 281–293 (DALEPEAGPEDPA) the composition is skewed to acidic residues. The segment covering 294–304 (EAERTLDRRSD) has biased composition (basic and acidic residues).

It is found in the membrane. The polypeptide is RING finger protein 225 (Homo sapiens (Human)).